Reading from the N-terminus, the 156-residue chain is MDLEFGRFPIFSILEDMLEAPEEQTEKTRNNPSRAYMRDAKAMAATPADVIEHPDAYVFAVDMPGIKGDEIQVQIENENVLVVSGKRQRDNKENEGVKFVRMERRMGKFMRKFQLPDNADLEKISAACNDGVLKVTIPKLPPPEPKKPKTIQVQVA.

The 118-residue stretch at 39 to 156 (DAKAMAATPA…KPKTIQVQVA (118 aa)) folds into the sHSP domain.

It belongs to the small heat shock protein (HSP20) family. As to quaternary structure, may form oligomeric structures.

The protein resides in the cytoplasm. This Arabidopsis thaliana (Mouse-ear cress) protein is 17.7 kDa class II heat shock protein (HSP17.7).